Consider the following 52-residue polypeptide: Large ribosomal subunit protein bL32c (52 aa).

This sequence belongs to the bacterial ribosomal protein bL32 family.

The protein localises to the plastid. It is found in the chloroplast. This chain is Large ribosomal subunit protein bL32c, found in Eucalyptus globulus subsp. globulus (Tasmanian blue gum).